The chain runs to 549 residues: Arginine-containing cyclodipeptide synthase amaA (549 aa).

The short motif at D445–E449 is the Conserved DDXXE motif element.

Belongs to the arginine-containing cyclodipeptide synthase family.

It carries out the reaction L-prolyl-tRNA(Pro) + L-arginyl-tRNA(Arg) = cyclo(L-arginyl-L-prolyl) + tRNA(Pro) + tRNA(Arg) + 2 H(+). It functions in the pathway secondary metabolite biosynthesis. In terms of biological role, arginine-containing cyclodipeptide synthase; part of the cluster that mediates the biosynthesis of a highly modified cyclo-arginine-proline dipeptide (cRP). Within the pathway, amaA acts as the scaffold-generating enzyme and is responsible for formation of the cyclo-Arg-Pro diketopiperazine (cRW) from L-arginyl-tRNA(Arg) + L-prolyl-tRNA(Pro). Additional enzymes from the cluster then further modify the cyclo-Arg-Pro diketopiperazine (cRW) scaffold. In Apiospora montagnei (Sphaeria apiospora), this protein is Arginine-containing cyclodipeptide synthase amaA.